Reading from the N-terminus, the 260-residue chain is Carbonic anhydrase 3 (260 aa).

The residue at position 2 (A2) is an N-acetylalanine. The Alpha-carbonic anhydrase domain occupies 3 to 259 (KEWGYASHNG…VKGRVVRASF (257 aa)). Phosphoserine is present on residues S29, S43, S48, S50, and S55. The interval 64-67 (KTCR) is involved in proton transfer. At T73 the chain carries Phosphothreonine. The Zn(2+) site is built by H94, H96, and H119. Phosphotyrosine is present on Y127. Phosphothreonine is present on residues T129 and T176. C182 and C187 each carry S-glutathionyl cysteine. Residue 198–199 (TT) participates in substrate binding. T216 is subject to Phosphothreonine. At S219 the chain carries Phosphoserine.

The protein belongs to the alpha-carbonic anhydrase family. It depends on Zn(2+) as a cofactor. Post-translationally, S-thiolated both by thiol-disulfide exchange with glutathione disulfide and by oxyradical-initiated S-thiolation with reduced glutathione. S-glutathionylated in hepatocytes under oxidative stress. In terms of tissue distribution, expressed at lower levels in adipose tissue from animals that were either genetically obese or had experimentally induced obesity.

The protein resides in the cytoplasm. It carries out the reaction hydrogencarbonate + H(+) = CO2 + H2O. Inhibited by acetazolamide. Its function is as follows. Reversible hydration of carbon dioxide. This chain is Carbonic anhydrase 3, found in Mus musculus (Mouse).